The sequence spans 738 residues: Ethylene receptor (738 aa).

The next 3 membrane-spanning stretches (helical) occupy residues 23-43, 54-74, and 92-112; these read ISDFFIALAYFSIPLELIYFV, VLVQFGAFIVLCGATHLINLW, and VLTAVVSCATALMLVHIIPDL. Residues Cys65 and His69 each coordinate Cu cation. The GAF domain occupies 158-307; it reads DRHTILKTTL…VVADQVAVAL (150 aa). Positions 350–589 constitute a Histidine kinase domain; that stretch reads VMNHEMRTPM…IFIVKLGFAE (240 aa). His353 bears the Phosphohistidine; by autocatalysis mark. Residues 612 to 729 form the Response regulatory domain; that stretch reads PGLKVLVMDD…KMRSVLSELL (118 aa). A 4-aspartylphosphate modification is found at Asp660.

The protein belongs to the ethylene receptor family. As to quaternary structure, homodimer; disulfide-linked. Cu cation is required as a cofactor. In terms of processing, activation probably requires a transfer of a phosphate group between a His in the transmitter domain and an Asp of the receiver domain.

The protein resides in the endoplasmic reticulum membrane. It carries out the reaction ATP + protein L-histidine = ADP + protein N-phospho-L-histidine.. May act early in the ethylene signal transduction pathway, possibly as an ethylene receptor, or as a regulator of the pathway. The polypeptide is Ethylene receptor (ETR1) (Prunus persica (Peach)).